Here is a 356-residue protein sequence, read N- to C-terminus: Caspase activity and apoptosis inhibitor 1 (356 aa).

Over residues 1–14 the composition is skewed to basic residues; the sequence is MTGKKSSREKRRKR. Disordered stretches follow at residues 1–24 and 54–80; these read MTGK…ASLA and VAGG…GSLQ. Ser68 is modified (phosphoserine). A Phosphothreonine modification is found at Thr69. Lys84 is covalently cross-linked (Glycyl lysine isopeptide (Lys-Gly) (interchain with G-Cter in SUMO2)). A phosphoserine mark is found at Ser100 and Ser183. Residues 208–234 are disordered; the sequence is DSTSSLRENKQPEVLESKQGKGEDSDV. Residues 214–231 show a composition bias toward basic and acidic residues; the sequence is RENKQPEVLESKQGKGED. Residues 276–306 adopt a coiled-coil conformation; sequence ENTVQSEAGQIDDLERDIEKSVNEILGLAES. Ser307 carries the phosphoserine modification.

Functionally, anti-apoptotic protein that modulates a caspase-10 dependent mitochondrial caspase-3/9 feedback amplification loop. This chain is Caspase activity and apoptosis inhibitor 1 (Caap1), found in Mus musculus (Mouse).